Here is a 96-residue protein sequence, read N- to C-terminus: RxLR effector protein PITG_11507 (96 aa).

A signal peptide spans 1-19 (MRLSFIIVAVSLLAGGSGA). The interval 27–59 (SDVLTSRGTNEGARTGKRSLRYDSNVERTGEED) is disordered. The short motif at 44–59 (RSLRYDSNVERTGEED) is the RxLR-dEER element. Positions 46-55 (LRYDSNVERT) are enriched in basic and acidic residues.

The protein belongs to the RxLR effector family.

Its subcellular location is the secreted. It localises to the host nucleus. The protein resides in the host cytoplasm. Functionally, effector that enhances P.infestans colonization of Nicotiana benthamiana leaves. This Phytophthora infestans (strain T30-4) (Potato late blight agent) protein is RxLR effector protein PITG_11507.